A 176-amino-acid chain; its full sequence is ATP-dependent protease subunit HslV (176 aa).

The active site involves T2. Na(+) contacts are provided by G157, C160, and T163.

It belongs to the peptidase T1B family. HslV subfamily. In terms of assembly, a double ring-shaped homohexamer of HslV is capped on each side by a ring-shaped HslU homohexamer. The assembly of the HslU/HslV complex is dependent on binding of ATP.

It localises to the cytoplasm. It carries out the reaction ATP-dependent cleavage of peptide bonds with broad specificity.. Its activity is regulated as follows. Allosterically activated by HslU binding. Protease subunit of a proteasome-like degradation complex believed to be a general protein degrading machinery. In Pseudomonas putida (strain ATCC 47054 / DSM 6125 / CFBP 8728 / NCIMB 11950 / KT2440), this protein is ATP-dependent protease subunit HslV.